The chain runs to 512 residues: Maturase K (512 aa).

The protein belongs to the intron maturase 2 family. MatK subfamily.

It localises to the plastid. Its subcellular location is the chloroplast. Functionally, usually encoded in the trnK tRNA gene intron. Probably assists in splicing its own and other chloroplast group II introns. This Filarum manserichense protein is Maturase K.